A 378-amino-acid polypeptide reads, in one-letter code: Putative gustatory receptor 22f (378 aa).

The Cytoplasmic portion of the chain corresponds to 1 to 13; sequence MKMFQPRRGFSCH. A helical transmembrane segment spans residues 14–34; sequence LAWFMLQTTLYASWLLGLFPF. The Extracellular portion of the chain corresponds to 35–48; the sequence is TFDSRRKQLKRSRW. Residues 49 to 69 traverse the membrane as a helical segment; the sequence is LLLYGFVLHSLAMCLAMSSHL. The Cytoplasmic portion of the chain corresponds to 70-88; that stretch reads ASKQRRKYNAFERNPLLEK. A helical membrane pass occupies residues 89 to 109; it reads IYMQFQVTTFFTISVLLLMNV. The Extracellular portion of the chain corresponds to 110–143; that stretch reads WKSNTVRKIANELLTLEGQVKDLLTLKNCPNFNC. The helical transmembrane segment at 144 to 164 threads the bilayer; that stretch reads FVIKKHVAAIGQFVISIYFCL. Over 165 to 178 the chain is Cytoplasmic; sequence CQENSYPKILKILC. A helical membrane pass occupies residues 179-199; the sequence is CLPSVGLQLIIMHFHTEIILV. Residues 200 to 245 are Extracellular-facing; it reads YRYVWLVNETLEDSHHLSSSRIHALASLYDRLLKLSELVVACNDLQ. An N-linked (GlcNAc...) asparagine glycan is attached at Asn-207. Residues 246-266 traverse the membrane as a helical segment; sequence LILMLIIYLIGNTVQIFFLIV. Topologically, residues 267-354 are cytoplasmic; that stretch reads LGVSMNKRYI…LCGLFSINHN (88 aa). A helical membrane pass occupies residues 355 to 375; sequence MGFQMIITSFLYLVYLLQFDF. Topologically, residues 376–378 are extracellular; that stretch reads MNL.

Belongs to the insect chemoreceptor superfamily. Gustatory receptor (GR) family. Gr22e subfamily. As to expression, taste bristles in the foreleg and labial palps.

The protein resides in the cell membrane. Probable gustatory receptor which mediates acceptance or avoidance behavior, depending on its substrates. The protein is Putative gustatory receptor 22f (Gr22f) of Drosophila melanogaster (Fruit fly).